The sequence spans 100 residues: UPF0213 protein YhbQ (100 aa).

A GIY-YIG domain is found at 2 to 77 (TPWFLYLIRT…KQLTKRQKER (76 aa)).

It belongs to the UPF0213 family.

The protein is UPF0213 protein YhbQ of Shigella dysenteriae serotype 1 (strain Sd197).